The chain runs to 51 residues: DNA-directed RNA polymerases II, IV and V subunit 12 (51 aa).

Cys-12, Cys-15, Cys-29, and Cys-32 together coordinate Zn(2+).

It belongs to the archaeal Rpo12/eukaryotic RPC10 RNA polymerase subunit family. As to quaternary structure, component of the RNA polymerase II, IV and V complexes. Associates with the mediator complex. Interacts with NRPD1.

Its subcellular location is the nucleus. Functionally, DNA-dependent RNA polymerase catalyzes the transcription of DNA into RNA using the four ribonucleoside triphosphates as substrates. Component of RNA polymerase II which synthesizes mRNA precursors and many functional non-coding RNAs. Pol II is the central component of the basal RNA polymerase II transcription machinery. It is composed of mobile elements that move relative to each other. Component of RNA polymerases IV and V which mediate short-interfering RNAs (siRNA) accumulation and subsequent RNA-directed DNA methylation-dependent (RdDM) transcriptional gene silencing (TGS) of endogenous repeated sequences, including transposable elements. The protein is DNA-directed RNA polymerases II, IV and V subunit 12 (NRPB12) of Arabidopsis thaliana (Mouse-ear cress).